A 447-amino-acid polypeptide reads, in one-letter code: NADP-specific glutamate dehydrogenase (447 aa).

Lys-92, Gln-113, and Lys-116 together coordinate substrate. Lys-128 functions as the Proton donor in the catalytic mechanism. Gly-167 contributes to the substrate binding site. Thr-211 and Asn-242 together coordinate NADP(+). Ser-380 serves as a coordination point for substrate.

It belongs to the Glu/Leu/Phe/Val dehydrogenases family. In terms of assembly, homohexamer.

The catalysed reaction is L-glutamate + NADP(+) + H2O = 2-oxoglutarate + NH4(+) + NADPH + H(+). Its activity is regulated as follows. Competitively inhibited by homoserine and by glutamine. Its function is as follows. Catalyzes the reversible oxidative deamination of glutamate to alpha-ketoglutarate and ammonia. The chain is NADP-specific glutamate dehydrogenase from Escherichia coli (strain K12).